A 266-amino-acid polypeptide reads, in one-letter code: Ribosome-recycling factor, chloroplastic (266 aa).

Low complexity predominate over residues Met-1–Pro-26. Residues Met-1–Gly-30 are disordered. The transit peptide at Met-1–Ala-74 directs the protein to the chloroplast. 2 coiled-coil regions span residues Thr-75–Arg-109 and Val-207–Ile-266.

This sequence belongs to the RRF family.

The protein localises to the plastid. It is found in the chloroplast. Responsible for the release of ribosomes from messenger RNA at the termination of chloroplastic protein biosynthesis. The protein is Ribosome-recycling factor, chloroplastic of Oryza sativa subsp. indica (Rice).